We begin with the raw amino-acid sequence, 383 residues long: Succinyl-diaminopimelate desuccinylase (383 aa).

Residue histidine 73 coordinates Zn(2+). The active site involves aspartate 75. Residue aspartate 107 participates in Zn(2+) binding. Glutamate 141 (proton acceptor) is an active-site residue. Glutamate 142, glutamate 170, and histidine 356 together coordinate Zn(2+).

Belongs to the peptidase M20A family. DapE subfamily. In terms of assembly, homodimer. Requires Zn(2+) as cofactor. Co(2+) is required as a cofactor.

The enzyme catalyses N-succinyl-(2S,6S)-2,6-diaminopimelate + H2O = (2S,6S)-2,6-diaminopimelate + succinate. It functions in the pathway amino-acid biosynthesis; L-lysine biosynthesis via DAP pathway; LL-2,6-diaminopimelate from (S)-tetrahydrodipicolinate (succinylase route): step 3/3. Its function is as follows. Catalyzes the hydrolysis of N-succinyl-L,L-diaminopimelic acid (SDAP), forming succinate and LL-2,6-diaminopimelate (DAP), an intermediate involved in the bacterial biosynthesis of lysine and meso-diaminopimelic acid, an essential component of bacterial cell walls. The chain is Succinyl-diaminopimelate desuccinylase from Pseudomonas syringae pv. tomato (strain ATCC BAA-871 / DC3000).